Here is a 412-residue protein sequence, read N- to C-terminus: CinA-like protein (412 aa).

It belongs to the CinA family.

The chain is CinA-like protein from Syntrophotalea carbinolica (strain DSM 2380 / NBRC 103641 / GraBd1) (Pelobacter carbinolicus).